Consider the following 309-residue polypeptide: MAHINCTQATEFILVGLTDHQELKMPLFVLFLSIYLFTVVGNLGLILLIRADTSLNTPMYFFLSNLAFVDFCYSSVITPKMLGNFLYKQNVISFDACATQLGCFLTFMISESLLLASMAYDRYVAICNPLLYMVVMTPGICIQLVAVPYSYSFLMALFHTILTFRLSYCHSNIVNHFYCDDMPLLRLTCSDTRFKQLWIFACAGIMFISSLLIVFVSYMFIISAILRMHSAEGRQKAFSTCGSHMLAVTIFYGTLIFMYLQPSSSHALDTDKMASVFYTVIIPMLNPLIYSLQNKEVKEALKKIIINKN.

Residues 1–25 (MAHINCTQATEFILVGLTDHQELKM) lie on the Extracellular side of the membrane. Asparagine 5 carries an N-linked (GlcNAc...) asparagine glycan. A helical membrane pass occupies residues 26–46 (PLFVLFLSIYLFTVVGNLGLI). The Cytoplasmic segment spans residues 47–54 (LLIRADTS). Residues 55–75 (LNTPMYFFLSNLAFVDFCYSS) form a helical membrane-spanning segment. At 76-99 (VITPKMLGNFLYKQNVISFDACAT) the chain is on the extracellular side. Cysteines 97 and 189 form a disulfide. Residues 100-120 (QLGCFLTFMISESLLLASMAY) form a helical membrane-spanning segment. The Cytoplasmic portion of the chain corresponds to 121-139 (DRYVAICNPLLYMVVMTPG). The helical transmembrane segment at 140-160 (ICIQLVAVPYSYSFLMALFHT) threads the bilayer. Residues 161 to 197 (ILTFRLSYCHSNIVNHFYCDDMPLLRLTCSDTRFKQL) lie on the Extracellular side of the membrane. The helical transmembrane segment at 198 to 217 (WIFACAGIMFISSLLIVFVS) threads the bilayer. The Cytoplasmic segment spans residues 218–237 (YMFIISAILRMHSAEGRQKA). A helical membrane pass occupies residues 238–258 (FSTCGSHMLAVTIFYGTLIFM). Residues 259 to 271 (YLQPSSSHALDTD) lie on the Extracellular side of the membrane. The helical transmembrane segment at 272–292 (KMASVFYTVIIPMLNPLIYSL) threads the bilayer. The Cytoplasmic segment spans residues 293 to 309 (QNKEVKEALKKIIINKN).

The protein belongs to the G-protein coupled receptor 1 family.

It localises to the cell membrane. Odorant receptor. The sequence is that of Olfactory receptor 8U1 (OR8U1) from Homo sapiens (Human).